A 1014-amino-acid chain; its full sequence is Isoleucine--tRNA ligase (1014 aa).

Positions 48-58 (PTANGRPGIHH) match the 'HIGH' region motif. The 'KMSKS' region motif lies at 628 to 632 (KMSKS). ATP is bound at residue lysine 631.

It belongs to the class-I aminoacyl-tRNA synthetase family. IleS type 2 subfamily. Monomer. The cofactor is Zn(2+).

Its subcellular location is the cytoplasm. The enzyme catalyses tRNA(Ile) + L-isoleucine + ATP = L-isoleucyl-tRNA(Ile) + AMP + diphosphate. Catalyzes the attachment of isoleucine to tRNA(Ile). As IleRS can inadvertently accommodate and process structurally similar amino acids such as valine, to avoid such errors it has two additional distinct tRNA(Ile)-dependent editing activities. One activity is designated as 'pretransfer' editing and involves the hydrolysis of activated Val-AMP. The other activity is designated 'posttransfer' editing and involves deacylation of mischarged Val-tRNA(Ile). This Dehalococcoides mccartyi (strain ATCC BAA-2266 / KCTC 15142 / 195) (Dehalococcoides ethenogenes (strain 195)) protein is Isoleucine--tRNA ligase.